Reading from the N-terminus, the 484-residue chain is 3-isopropylmalate dehydratase large subunit (484 aa).

[4Fe-4S] cluster-binding residues include Cys-352, Cys-412, and Cys-415. The tract at residues 463–484 (TLSSPSDLDPAPASAAIRTDAA) is disordered. Positions 464-478 (LSSPSDLDPAPASAA) are enriched in low complexity.

Belongs to the aconitase/IPM isomerase family. LeuC type 1 subfamily. In terms of assembly, heterodimer of LeuC and LeuD. [4Fe-4S] cluster is required as a cofactor.

It catalyses the reaction (2R,3S)-3-isopropylmalate = (2S)-2-isopropylmalate. It functions in the pathway amino-acid biosynthesis; L-leucine biosynthesis; L-leucine from 3-methyl-2-oxobutanoate: step 2/4. In terms of biological role, catalyzes the isomerization between 2-isopropylmalate and 3-isopropylmalate, via the formation of 2-isopropylmaleate. This Pseudarthrobacter chlorophenolicus (strain ATCC 700700 / DSM 12829 / CIP 107037 / JCM 12360 / KCTC 9906 / NCIMB 13794 / A6) (Arthrobacter chlorophenolicus) protein is 3-isopropylmalate dehydratase large subunit.